A 224-amino-acid polypeptide reads, in one-letter code: Type II restriction enzyme BstVI (224 aa).

The protein belongs to the XhoI type II restriction endonuclease family.

It carries out the reaction Endonucleolytic cleavage of DNA to give specific double-stranded fragments with terminal 5'-phosphates.. A P subtype restriction enzyme that recognizes the double-stranded sequence 5'-CTCGAG-3' and cleaves after C-1. This is Type II restriction enzyme BstVI from Geobacillus stearothermophilus (Bacillus stearothermophilus).